Reading from the N-terminus, the 360-residue chain is Protein RecA (360 aa).

65-72 contacts ATP; that stretch reads GPESSGKT.

The protein belongs to the RecA family.

The protein localises to the cytoplasm. Functionally, can catalyze the hydrolysis of ATP in the presence of single-stranded DNA, the ATP-dependent uptake of single-stranded DNA by duplex DNA, and the ATP-dependent hybridization of homologous single-stranded DNAs. It interacts with LexA causing its activation and leading to its autocatalytic cleavage. The chain is Protein RecA from Tolumonas auensis (strain DSM 9187 / NBRC 110442 / TA 4).